The chain runs to 834 residues: Leucine--tRNA ligase (834 aa).

A 'HIGH' region motif is present at residues 42-52; it reads PYPSGKLHMGH. The short motif at 619–623 is the 'KMSKS' region element; it reads KMSKS. Position 622 (Lys622) interacts with ATP.

It belongs to the class-I aminoacyl-tRNA synthetase family.

Its subcellular location is the cytoplasm. It carries out the reaction tRNA(Leu) + L-leucine + ATP = L-leucyl-tRNA(Leu) + AMP + diphosphate. The polypeptide is Leucine--tRNA ligase (Actinobacillus pleuropneumoniae serotype 7 (strain AP76)).